Reading from the N-terminus, the 155-residue chain is Protein phosphatase 1 regulatory subunit 17 (155 aa).

Positions 41-73 are disordered; that stretch reads KKKPRKGKNVQATLNVESDQKKPRRKDTPALHI. Over residues 58–69 the composition is skewed to basic and acidic residues; that stretch reads SDQKKPRRKDTP. Phosphothreonine; by PKG/PRKG1 is present on residues Thr68 and Thr119.

Post-translationally, substrate for cGMP-dependent protein kinase. Phosphorylated by PRKG1 isoform alpha. Phosphorylation of Thr-68 and Thr-119 is required for its phosphatase activity. In terms of processing, substrate for cGMP-dependent protein kinase. As to expression, highly expressed in cerebellum.

Its function is as follows. Inhibits phosphatase activities of protein phosphatase 1 (PP1) and protein phosphatase 2A (PP2A) complexes. The polypeptide is Protein phosphatase 1 regulatory subunit 17 (PPP1R17) (Homo sapiens (Human)).